A 525-amino-acid chain; its full sequence is Cyclic AMP-responsive element-binding protein 3-like protein 2 (525 aa).

The Cytoplasmic portion of the chain corresponds to 1 to 382; it reads MEIMESGDPV…SCKAAGTQTG (382 aa). 3 disordered regions span residues 85-104, 203-267, and 309-338; these read LCGD…DDNF, EALQ…QGSG, and NKIS…SSEN. Composition is skewed to polar residues over residues 90–102 and 213–239; these read RPQS…SSDD and SSHG…QSQA. The bZIP domain occupies 299-362; that stretch reads ALKKIRRKIK…RTLLQQLQRL (64 aa). Positions 301-330 are basic motif; the sequence is KKIRRKIKNKISAQESRRKKKEYMDSLEKR. Over residues 322 to 332 the composition is skewed to basic and acidic residues; the sequence is EYMDSLEKRVE. Residues 341–362 are leucine-zipper; that stretch reads LRKKVEVLESTNRTLLQQLQRL. The chain crosses the membrane as a helical; Signal-anchor for type II membrane protein span at residues 383–403; sequence TCLMMVVLCFAVIFGSFTQNL. Topologically, residues 404 to 525 are lumenal; sequence DMYSSSSKTI…ELDRTVNTTS (122 aa). Residues 433–436 carry the S1P recognition motif; that stretch reads RKLL. N-linked (GlcNAc...) asparagine glycosylation is found at Asn-490, Asn-509, and Asn-522.

It belongs to the bZIP family. ATF subfamily. Binds DNA as a dimer. Post-translationally, upon ER stress, translocated to the Golgi apparatus, where it is processed by regulated intramembrane proteolysis (RIP) to release the cytosol-facing N-terminal transcription factor domain. The cleavage is performed sequentially by site-1 and site-2 proteases (S1P/mbtps1 and S2P/mbtps2).

Its subcellular location is the endoplasmic reticulum membrane. It is found in the nucleus. In terms of biological role, transcription factor involved in unfolded protein response (UPR). In the absence of endoplasmic reticulum (ER) stress, inserted into ER membranes, with N-terminal DNA-binding and transcription activation domains oriented toward the cytosolic face of the membrane. In response to ER stress, transported to the Golgi, where it is cleaved in a site-specific manner by resident proteases S1P/mbtps1 and S2P/mbtps2. The released N-terminal cytosolic domain is translocated to the nucleus to effect transcription of specific target genes. Plays a critical role in chondrogenesis. May protect neuroblastoma cells from ER stress-induced death. In vitro activates transcription of target genes via direct binding to the CRE site. The sequence is that of Cyclic AMP-responsive element-binding protein 3-like protein 2 (creb3l2) from Xenopus laevis (African clawed frog).